Consider the following 131-residue polypeptide: Small ribosomal subunit protein eS8 (131 aa).

The tract at residues 1–42 (MKLGAYYKGGDLKKPSGGKKRKVRKTKKKALGGGPPQIPKLG) is disordered. Residues 16 to 30 (SGGKKRKVRKTKKKA) show a composition bias toward basic residues.

This sequence belongs to the eukaryotic ribosomal protein eS8 family. Part of the 30S ribosomal subunit.

In Pyrobaculum aerophilum (strain ATCC 51768 / DSM 7523 / JCM 9630 / CIP 104966 / NBRC 100827 / IM2), this protein is Small ribosomal subunit protein eS8.